An 856-amino-acid polypeptide reads, in one-letter code: MGNGTSRVVGCFVPSNDKNGVDLEFLEPLDEGLGHSFCYVRPSIFESPDITPSNSERFTIDSSTIDSETLTGSFRNDIVDDPSFLNRHNSKGLAETTFKAISGASVSANVSTARTGNQMALCSSDVLEPAASFESTSSFASIPLQPLPRGGSGPLNGFMSGPLERGFASGPLDRNNGFMSGPIEKGVMSGPLDVSDRSNFSAPLSFRRKKPRFQRFMRSVSGPMKSTLARTFSRRSGGLSWMHRFFLHPETRVSWAVGKDGKLHGEDPESCLESNRNLQWAHGKAGEDRVHVVLSEEQGWLFIGIYDGFSGPDAPDFVMSHLYKAIDKELEGLLWDYEEPSEDNQLQPDQEPPTEENMCDPESISEQHSKSVVAESEEVMIDDISSLGNTDTQIADGPPGDSAGPGKKSMRLYELLQLEQWEGEEIGLKRYGGNVALNNMTNQVENPSTSGGGAGNDPCTTDRSALDGIPNSGQRHGTKKSQISSKIRRMYQKQKSLRKKLFPWSYDWHREEGICVEEKIVESSGPIRRRWSGTVDHDAVLRAMARALESTEEAYMDMVEKSLDINPELALMGSCVLVMLMKDQDVYVMNVGDSRAILAQERLHDRHSNPGFGNDEGIGHKSRSRESLVRIELDRISEESPIHNQATPISVSNKNRDVTSYRLKMRAVQLSSDHSTSVEEEIWRIRSEHPEDDQSILKDRVKGQLKVTRAFGAGFLKKPNFNEALLEMFQVEYIGTDPYITCEPCTVHHRLTSSDRFMVLSSDGLYEYFSNEEVVAHVTWFIENVPEGDPAQYLIAELLSRAATKNGMEFHDLLDIPQGDRRKYHDDVSVMVVSLEGRIWRSSGQYYPERKQKFNR.

3 positions are modified to phosphoserine: S152, S189, and S201. The PPM-type phosphatase domain occupies 269-835; that stretch reads ESCLESNRNL…DDVSVMVVSL (567 aa). Residues D307 and G308 each coordinate Mn(2+). Disordered regions lie at residues 340–373, 388–407, and 446–485; these read PSED…KSVV, GNTD…GPGK, and NPST…QISS. A compositionally biased stretch (low complexity) spans 395-407; it reads ADGPPGDSAGPGK. Residues 471-485 are compositionally biased toward polar residues; sequence NSGQRHGTKKSQISS. Residues D763 and D826 each contribute to the Mn(2+) site.

Belongs to the PP2C family. Mg(2+) is required as a cofactor. It depends on Mn(2+) as a cofactor. Expressed in roots, leaves, stems, inflorescences, flowers and throughout the shoot meristem.

Its subcellular location is the nucleus. It catalyses the reaction O-phospho-L-seryl-[protein] + H2O = L-seryl-[protein] + phosphate. It carries out the reaction O-phospho-L-threonyl-[protein] + H2O = L-threonyl-[protein] + phosphate. With respect to regulation, insensitive to okadaic acid. Functionally, involved in the regulation of pedicel length and of CLAVATA pathways controlling stem cell identity at shoot and flower meristems. The sequence is that of Protein phosphatase 2C 32 (POL) from Arabidopsis thaliana (Mouse-ear cress).